The sequence spans 121 residues: UPF0344 protein BCA_1194 (121 aa).

The next 4 helical transmembrane spans lie at 6 to 26, 38 to 58, 65 to 85, and 92 to 112; these read ITAW…YSAG, LMYI…MKTA, WYGL…MVLV, and ATGA…YLGL.

The protein belongs to the UPF0344 family.

Its subcellular location is the cell membrane. The chain is UPF0344 protein BCA_1194 from Bacillus cereus (strain 03BB102).